The chain runs to 356 residues: MSL complex subunit 3B (356 aa).

The MRG domain maps to 2–350; sequence EERTVTLEIP…SEVHYSTRNP (349 aa). 2 disordered regions span residues 135-210 and 225-247; these read TNRS…WQQD and KTPVHSRSSSPTLTPSQEGSPVF. Low complexity predominate over residues 142-156; it reads LSPSLRLLNPSRPQS. 2 stretches are compositionally biased toward polar residues: residues 178–189 and 229–243; these read AVQSLRRSSPHT and HSRSSSPTLTPSQEG.

The protein resides in the nucleus. Its function is as follows. Probable non-catalytic component of the MSL histone acetyltransferase complex, a multiprotein complex that mediates the majority of histone H4 acetylation at 'Lys-16' (H4K16ac), an epigenetic mark that prevents chromatin compaction. The protein is MSL complex subunit 3B of Homo sapiens (Human).